A 142-amino-acid chain; its full sequence is MRKKHLKAALGEAQYKVSMLSEENNRLAIENQDKDYRITNLLGEVEVVREANVKLSQRLNEVLAANRRYAIKQRTQNELFGKALAQVKPETGPSRPNRKKLTEREVKDIRQAYLGGMKQKDLAENYGVNPATISRTVRGIYH.

The disordered stretch occupies residues 82 to 101 (KALAQVKPETGPSRPNRKKL).

This is Gene 46 protein (46) from Mycobacterium (Mycobacteriophage L5).